Consider the following 531-residue polypeptide: Acetate CoA-transferase YdiF (531 aa).

The active-site 5-glutamyl coenzyme A thioester intermediate is glutamate 333.

It belongs to the 3-oxoacid CoA-transferase family. Homotetramer; dimer of dimers.

It catalyses the reaction an acyl-CoA + acetate = a carboxylate + acetyl-CoA. In terms of biological role, coA transferase having broad substrate specificity for short-chain acyl-CoA thioesters with the activity decreasing when the length of the carboxylic acid chain exceeds four carbons. Exhibits high activity with acetoacetyl-CoA, propionyl-CoA, crotonoyl-CoA or butyryl-CoA as donors, with acetate as an acceptor. When acetyl-CoA is used as the donor, propionate, acetoacetate, butyrate, isobutyrate, and 4-hydroxybutyrate can be utilized as acceptors but not isovalerate. May play a role in short-chain fatty acid metabolism in E.coli. This Escherichia coli O157:H7 protein is Acetate CoA-transferase YdiF.